A 177-amino-acid chain; its full sequence is Transcriptional repressor NrdR (177 aa).

The segment at 3–34 is a zinc-finger region; that stretch reads CPYCGGSETQVKDSRPSEDGAAIRRRRVCPDC. Residues 49–139 form the ATP-cone domain; that stretch reads VVVLKRSGKR…VYKNFREARD (91 aa). The disordered stretch occupies residues 148-177; it reads SDGMPVPAAAPEAEGDPEPEASGRRRAGRP.

Belongs to the NrdR family. The cofactor is Zn(2+).

Negatively regulates transcription of bacterial ribonucleotide reductase nrd genes and operons by binding to NrdR-boxes. This Methylobacterium radiotolerans (strain ATCC 27329 / DSM 1819 / JCM 2831 / NBRC 15690 / NCIMB 10815 / 0-1) protein is Transcriptional repressor NrdR.